Here is an 874-residue protein sequence, read N- to C-terminus: Lon protease (874 aa).

The Lon N-terminal domain occupies 18-261 (LPVLPLDDAV…RLLTWTKEHL (244 aa)). Disordered regions lie at residues 47–68 (VDAARTGGSAGSSDARAPGISS), 120–144 (GGVRPAPAGTDTTGTGTADATSGAG), and 298–318 (LSELDGSGGGADGASGSEPAD). The span at 124-142 (PAPAGTDTTGTGTADATSG) shows a compositional bias: low complexity. 430–437 (GPPGVGKT) serves as a coordination point for ATP. Residues 667–851 (TALPGVATGL…REVLDLALEP (185 aa)) form the Lon proteolytic domain. Active-site residues include Ser-757 and Lys-800. The disordered stretch occupies residues 853-874 (FDADHGGRSPGRAGHSPTALAA).

This sequence belongs to the peptidase S16 family. As to quaternary structure, homohexamer. Organized in a ring with a central cavity.

Its subcellular location is the cytoplasm. The enzyme catalyses Hydrolysis of proteins in presence of ATP.. In terms of biological role, ATP-dependent serine protease that mediates the selective degradation of mutant and abnormal proteins as well as certain short-lived regulatory proteins. Required for cellular homeostasis and for survival from DNA damage and developmental changes induced by stress. Degrades polypeptides processively to yield small peptide fragments that are 5 to 10 amino acids long. Binds to DNA in a double-stranded, site-specific manner. In Frankia alni (strain DSM 45986 / CECT 9034 / ACN14a), this protein is Lon protease.